A 319-amino-acid chain; its full sequence is Acetyl-coenzyme A carboxylase carboxyl transferase subunit alpha (319 aa).

In terms of domain architecture, CoA carboxyltransferase C-terminal spans 35–296 (NIDEEVHRLR…KAQLLADLAD (262 aa)).

This sequence belongs to the AccA family. As to quaternary structure, acetyl-CoA carboxylase is a heterohexamer composed of biotin carboxyl carrier protein (AccB), biotin carboxylase (AccC) and two subunits each of ACCase subunit alpha (AccA) and ACCase subunit beta (AccD).

It localises to the cytoplasm. It catalyses the reaction N(6)-carboxybiotinyl-L-lysyl-[protein] + acetyl-CoA = N(6)-biotinyl-L-lysyl-[protein] + malonyl-CoA. The protein operates within lipid metabolism; malonyl-CoA biosynthesis; malonyl-CoA from acetyl-CoA: step 1/1. Component of the acetyl coenzyme A carboxylase (ACC) complex. First, biotin carboxylase catalyzes the carboxylation of biotin on its carrier protein (BCCP) and then the CO(2) group is transferred by the carboxyltransferase to acetyl-CoA to form malonyl-CoA. The chain is Acetyl-coenzyme A carboxylase carboxyl transferase subunit alpha from Escherichia coli O139:H28 (strain E24377A / ETEC).